We begin with the raw amino-acid sequence, 266 residues long: MEKTQDRDTLSGRMEAEGSLNSEELPPHPQSPPPPPSPRSPTSPVTPELPQPNAPTEVEARQLLVEEWGPLSGKLELPPRISWQLLFLERPLYRNLLSSPNPEGINIYQPAPPTGPTRKPLKELGNFRGWYITTQNLQGPLSWTVKEQCVNLLAKKLWEELLDDEQPDITIMDWFEDSRLDQCVYELHVWLLAADRRTVIAQHHVAPRTNGRGPPGRWIQVSHVFRQYGPGVRFVYFQHKAKNRMEPGGLRRTRVTDSSVSVQLRE.

Over residues 1–16 (MEKTQDRDTLSGRMEA) the composition is skewed to basic and acidic residues. Residues 1-53 (MEKTQDRDTLSGRMEAEGSLNSEELPPHPQSPPPPPSPRSPTSPVTPELPQPN) form a disordered region. The segment covering 27–41 (PHPQSPPPPPSPRSP) has biased composition (pro residues). S31, S37, S40, and S43 each carry phosphoserine. T46 carries the post-translational modification Phosphothreonine. One can recognise an FBA domain in the interval 86-264 (LFLERPLYRN…VTDSSVSVQL (179 aa)).

Strongly expressed in kidney. Weakly expressed in stomach, colon, duodenum and prostate.

It is found in the cytoplasm. Functionally, promotes cell proliferation. The chain is F-box only protein 50 (Nccrp1) from Mus musculus (Mouse).